The primary structure comprises 144 residues: Transcription antitermination protein NusB (144 aa).

The protein belongs to the NusB family.

Functionally, involved in transcription antitermination. Required for transcription of ribosomal RNA (rRNA) genes. Binds specifically to the boxA antiterminator sequence of the ribosomal RNA (rrn) operons. This is Transcription antitermination protein NusB from Histophilus somni (strain 2336) (Haemophilus somnus).